Here is a 151-residue protein sequence, read N- to C-terminus: uncharacterized protein (151 aa).

Positions 1-32 are cleaved as a signal peptide; the sequence is MEEAEKAKRRSIELLNETRNCAYSSFVALAEA. A helical membrane pass occupies residues 45 to 67; that stretch reads AIGFAGGISGSGHICGALWGSIA.

The protein resides in the membrane. This is an uncharacterized protein from Archaeoglobus fulgidus (strain ATCC 49558 / DSM 4304 / JCM 9628 / NBRC 100126 / VC-16).